Reading from the N-terminus, the 416-residue chain is Lipid III flippase (416 aa).

The Cytoplasmic segment spans residues 1-17 (MSLAKASLWTAASTLVK). The helical transmembrane segment at 18 to 38 (IGAGLLVGKLLAVSFGPAGLG) threads the bilayer. At 39-45 (LAANFRQ) the chain is on the periplasmic side. Residues 46 to 66 (LITVLGVLAGAGIFNGVTKYV) traverse the membrane as a helical segment. Topologically, residues 67–84 (AQYHDNPQQLRRVVGTSS) are cytoplasmic. A helical membrane pass occupies residues 85–105 (AMVLGFSTLMALVFVLAAAPI). The Periplasmic portion of the chain corresponds to 106 to 121 (SQGLFGNTDYQGLVRL). Residues 122-142 (VALVQMGIAWGNLLLALMKGF) form a helical membrane-spanning segment. At 143-144 (RD) the chain is on the cytoplasmic side. The helical transmembrane segment at 145 to 165 (AAGNALSLIVGSLIGVLAYYV) threads the bilayer. Residues 166–174 (SYRLGGYEG) are Periplasmic-facing. The helical transmembrane segment at 175-195 (ALLGLALIPALVVIPAAIMLI) threads the bilayer. The Cytoplasmic segment spans residues 196-216 (KRGVIPLSYLKPSWDNGLAGQ). The helical transmembrane segment at 217–237 (LSKFTLMALITSVTLPVAYIM) threads the bilayer. Topologically, residues 238-259 (MRKLLAAQYSWDEVGIWQGVSS) are periplasmic. A helical transmembrane segment spans residues 260 to 280 (ISDAYLQFITASFSVYLLPTL). The Cytoplasmic portion of the chain corresponds to 281–302 (SRLTEKRDITREVVKSLKFVLP). A helical transmembrane segment spans residues 303-323 (AVAAASFTVWLLRDFAIWLLL). At 324–334 (SNKFTAMRDLF) the chain is on the periplasmic side. A helical membrane pass occupies residues 335–355 (AWQLVGDVLKVGAYVFGYLVI). The Cytoplasmic portion of the chain corresponds to 356 to 370 (AKASLRFYILAEVSQ). Transmembrane regions (helical) follow at residues 371 to 391 (FTLL…LGAA) and 392 to 412 (QAYM…FLLW). The Cytoplasmic segment spans residues 413–416 (RRRA).

The protein belongs to the polysaccharide transport (PST) (TC 2.A.66.2) family. In terms of assembly, probably part of a complex composed of WzxE, WzyE and WzzE.

The protein localises to the cell inner membrane. Its pathway is bacterial outer membrane biogenesis; enterobacterial common antigen biosynthesis. In terms of biological role, mediates the transbilayer movement of Und-PP-GlcNAc-ManNAcA-Fuc4NAc (lipid III) from the inner to the outer leaflet of the cytoplasmic membrane during the assembly of enterobacterial common antigen (ECA). Required for the assembly of the phosphoglyceride-linked form of ECA (ECA(PG)) and the water-soluble cyclic form of ECA (ECA(CYC)). Could also mediate the translocation of Und-PP-GlcNAc. The polypeptide is Lipid III flippase (Escherichia coli (strain K12)).